The chain runs to 659 residues: Nitrate import ATP-binding protein NrtC (659 aa).

The 235-residue stretch at 5–239 (LAVDHVHQVF…RPRQRLEMME (235 aa)) folds into the ABC transporter domain. 42–49 (GHSGCGKS) contributes to the ATP binding site. The interval 255–278 (QQQRRAKRRAKAAAPAPAVAASQQ) is linker. Positions 279-659 (KTVRLGFLPG…VAPIPLATSA (381 aa)) are nrtA-like.

This sequence belongs to the ABC transporter superfamily. Nitrate/nitrite/cyanate uptake transporter (NitT) (TC 3.A.1.16) family. In terms of assembly, the complex is composed of two ATP-binding proteins (NrtC and NrtD), two transmembrane proteins (NrtB) and a solute-binding protein (NrtA).

The protein resides in the cell inner membrane. It carries out the reaction nitrate(out) + ATP + H2O = nitrate(in) + ADP + phosphate + H(+). With respect to regulation, transport is inhibited by ammonium. The C-terminal domain of NrtC is involved in the ammonium-promoted inhibition of the nitrate/nitrite transporter. Its function is as follows. Part of the ABC transporter complex NrtABCD involved in nitrate uptake. The complex is probably also involved in nitrite transport. Probably responsible for energy coupling to the transport system. The protein is Nitrate import ATP-binding protein NrtC of Synechococcus elongatus (strain ATCC 33912 / PCC 7942 / FACHB-805) (Anacystis nidulans R2).